A 378-amino-acid polypeptide reads, in one-letter code: Alcohol dehydrogenase 1 (378 aa).

C48 lines the Zn(2+) pocket. H49 to L53 contacts NAD(+). Zn(2+) contacts are provided by H69, C99, C102, C105, C113, and C177. Residues G202–G207, D226, K231, T274–V276, I297–A299, and T321–F323 each bind NAD(+).

This sequence belongs to the zinc-containing alcohol dehydrogenase family. Class-IV subfamily. As to quaternary structure, homodimer. It depends on Zn(2+) as a cofactor. In terms of tissue distribution, present in non-glandular trichome cells.

It is found in the nucleus. Its subcellular location is the cytoplasm. The protein localises to the cytosol. It catalyses the reaction (+)-artemisinic alcohol + NAD(+) = (+)-artemisinic aldehyde + NADH + H(+). Its pathway is sesquiterpene biosynthesis. Involved in the biosynthesis of the antimalarial endoperoxide artemisinin. Catalyzes the conversion of artemisinic alcohol into artemisinic aldehyde. This Artemisia annua (Sweet wormwood) protein is Alcohol dehydrogenase 1.